We begin with the raw amino-acid sequence, 405 residues long: Acetate kinase (405 aa).

N7 serves as a coordination point for Mg(2+). K14 lines the ATP pocket. R91 contributes to the substrate binding site. Catalysis depends on D148, which acts as the Proton donor/acceptor. ATP contacts are provided by residues 208 to 212 (HLGNG) and 283 to 285 (DFR). E384 contacts Mg(2+).

Belongs to the acetokinase family. Homodimer. Mg(2+) serves as cofactor. It depends on Mn(2+) as a cofactor.

It localises to the cytoplasm. It catalyses the reaction acetate + ATP = acetyl phosphate + ADP. The protein operates within metabolic intermediate biosynthesis; acetyl-CoA biosynthesis; acetyl-CoA from acetate: step 1/2. In terms of biological role, catalyzes the formation of acetyl phosphate from acetate and ATP. Can also catalyze the reverse reaction. The protein is Acetate kinase of Dictyoglomus turgidum (strain DSM 6724 / Z-1310).